The primary structure comprises 87 residues: U3-theraphotoxin-Hhn1a 13 (87 aa).

Positions 1–24 are cleaved as a signal peptide; the sequence is MVNMKASMFLTSAGLVPLFVVCYA. Residues 25-52 constitute a propeptide that is removed on maturation; the sequence is SESEEKEFPKEMLSSIFAVDNDFKQEER. 3 cysteine pairs are disulfide-bonded: Cys54/Cys67, Cys61/Cys72, and Cys66/Cys79.

Belongs to the neurotoxin 10 (Hwtx-1) family. 51 (Hntx-8) subfamily. Hntx-8 sub-subfamily. Expressed by the venom gland.

It localises to the secreted. Ion channel inhibitor. In Cyriopagopus hainanus (Chinese bird spider), this protein is U3-theraphotoxin-Hhn1a 13.